The sequence spans 157 residues: 6,7-dimethyl-8-ribityllumazine synthase 1 (157 aa).

5-amino-6-(D-ribitylamino)uracil is bound by residues Phe22, 53-55 (ALE), and 82-84 (TVI). 87-88 (ET) serves as a coordination point for (2S)-2-hydroxy-3-oxobutyl phosphate. Catalysis depends on His90, which acts as the Proton donor. Asn115 is a 5-amino-6-(D-ribitylamino)uracil binding site. (2S)-2-hydroxy-3-oxobutyl phosphate is bound at residue His129.

The protein belongs to the DMRL synthase family. In terms of assembly, homopentamer.

The catalysed reaction is (2S)-2-hydroxy-3-oxobutyl phosphate + 5-amino-6-(D-ribitylamino)uracil = 6,7-dimethyl-8-(1-D-ribityl)lumazine + phosphate + 2 H2O + H(+). It functions in the pathway cofactor biosynthesis; riboflavin biosynthesis; riboflavin from 2-hydroxy-3-oxobutyl phosphate and 5-amino-6-(D-ribitylamino)uracil: step 1/2. Catalyzes the formation of 6,7-dimethyl-8-ribityllumazine by condensation of 5-amino-6-(D-ribitylamino)uracil with 3,4-dihydroxy-2-butanone 4-phosphate. This is the penultimate step in the biosynthesis of riboflavin. This Brucella abortus (strain 2308) protein is 6,7-dimethyl-8-ribityllumazine synthase 1 (ribH1).